Consider the following 748-residue polypeptide: MFNEITKSVTWNGQVLELSTGKIARQADGAVTVKMGNSVLLCTAVVANKAKEGIGLLPLTINYREMAYAAGKIPGGFFKHEGKASDREVLVSRLIDRPIRPLFHPAFVNETHVTCSVLSYDPETPVDILAIIGASAALSLSPAPYLEIVAASKVGLINGEFVLNPTLALLKTSQLDLVVAGTSGSVMMVESEAHLLSEEQMLEAVKFGFESFQPVIKIIKELAEEAKKPKLEMQALYPASLKKEIEKLFVKEIEQAFAIKSKQERSTNLDLIPEKVLTHFVSDIENKKYSNYQIESALKAIESDILRNEILEKNRRIDGRSTTDIRQIACEIGLLPSAHGSALFTRGETQSLVSTTFGTSLDEQIVDSLEGEYKERFMLNYIFPPYSVNEAMPMKAPSRREVGHGKLAWRAINPILPNKVQFPYSIRVVAETTESNGSSSMATVCGSSLALMYAGVPIKAPVAGIAMGLVKEGKNFAVLSDILGDEDYFGDMDFKVAGTSEGITALQMDIKISGVDFKIMKVALEQARLGRLHILEQMNKVISKPNNELSKNAPSTTTIKIDKDKIRDIIGPSGKVIKEICETSGAKIDISDDGTVSVYASDRDKLKVALDKIKAIVVEPEIGEIFNGTVVKVLDSGAFINYVGNKDGFVHISEVSGERIETVSSVLKQGDIVKVKLIGFDNKGKAKLTIKNADKDKSSNNTKPKTHVNNTKDNSEPEQRRDSSKKRAWNEDNNAEIAEVITERKYFN.

The Mg(2+) site is built by Asp487 and Asp493. In terms of domain architecture, KH spans 554-613 (PSTTTIKIDKDKIRDIIGPSGKVIKEICETSGAKIDISDDGTVSVYASDRDKLKVALDKI). The S1 motif domain maps to 623–691 (GEIFNGTVVK…NKGKAKLTIK (69 aa)). Residues 693-733 (ADKDKSSNNTKPKTHVNNTKDNSEPEQRRDSSKKRAWNEDN) form a disordered region. Polar residues predominate over residues 699–712 (SNNTKPKTHVNNTK). Basic and acidic residues predominate over residues 713–722 (DNSEPEQRRD).

The protein belongs to the polyribonucleotide nucleotidyltransferase family. It depends on Mg(2+) as a cofactor.

Its subcellular location is the cytoplasm. It carries out the reaction RNA(n+1) + phosphate = RNA(n) + a ribonucleoside 5'-diphosphate. In terms of biological role, involved in mRNA degradation. Catalyzes the phosphorolysis of single-stranded polyribonucleotides processively in the 3'- to 5'-direction. The chain is Polyribonucleotide nucleotidyltransferase from Rickettsia peacockii (strain Rustic).